We begin with the raw amino-acid sequence, 340 residues long: Nuclear hormone receptor family member nhr-197 (340 aa).

A DNA-binding region (nuclear receptor) is located at residues 1–75 (MNCVVCSGRA…VGMTLAPLND (75 aa)). 2 NR C4-type zinc fingers span residues 3–23 (CVVCSGRATNRNYGAMSCFAC) and 39–58 (CKRIQNCTIHFKIFPKCRAC). Residues 98-337 (KNDKNYSHFV…KRIMQDLFSN (240 aa)) form the NR LBD domain.

It belongs to the nuclear hormone receptor family.

The protein resides in the nucleus. Orphan nuclear receptor. The protein is Nuclear hormone receptor family member nhr-197 (nhr-197) of Caenorhabditis elegans.